We begin with the raw amino-acid sequence, 481 residues long: GTPase Obg (481 aa).

An Obg domain is found at 2–159; the sequence is TTFVDRVVLH…IDVVLELKSV (158 aa). The 171-residue stretch at 160–330 folds into the OBG-type G domain; sequence ADVGLVGYPS…LMYAMGELVT (171 aa). GTP contacts are provided by residues 166–173, 191–195, 212–215, 282–285, and 311–313; these read GYPSAGKS, FTTLV, DVPG, NKVD, and SAA. Mg(2+) is bound by residues S173 and T193. One can recognise an OCT domain in the interval 348–426; the sequence is PKAVDDAGFT…IGEREFDWQP (79 aa). Residues 439 to 452 are compositionally biased toward basic and acidic residues; it reads GDQRLAEKSERPSA. A disordered region spans residues 439 to 481; sequence GDQRLAEKSERPSATERLAARKARRQRPEDEAEADEPVGDGEE. The segment covering 468–481 has biased composition (acidic residues); sequence DEAEADEPVGDGEE.

It belongs to the TRAFAC class OBG-HflX-like GTPase superfamily. OBG GTPase family. In terms of assembly, monomer. It depends on Mg(2+) as a cofactor.

Its subcellular location is the cytoplasm. An essential GTPase which binds GTP, GDP and possibly (p)ppGpp with moderate affinity, with high nucleotide exchange rates and a fairly low GTP hydrolysis rate. Plays a role in control of the cell cycle, stress response, ribosome biogenesis and in those bacteria that undergo differentiation, in morphogenesis control. The sequence is that of GTPase Obg from Salinispora tropica (strain ATCC BAA-916 / DSM 44818 / JCM 13857 / NBRC 105044 / CNB-440).